Here is a 434-residue protein sequence, read N- to C-terminus: Glutamate-1-semialdehyde 2,1-aminomutase (434 aa).

K265 carries the N6-(pyridoxal phosphate)lysine modification.

Belongs to the class-III pyridoxal-phosphate-dependent aminotransferase family. HemL subfamily. In terms of assembly, homodimer. The cofactor is pyridoxal 5'-phosphate.

Its subcellular location is the cytoplasm. The enzyme catalyses (S)-4-amino-5-oxopentanoate = 5-aminolevulinate. Its pathway is porphyrin-containing compound metabolism; protoporphyrin-IX biosynthesis; 5-aminolevulinate from L-glutamyl-tRNA(Glu): step 2/2. The sequence is that of Glutamate-1-semialdehyde 2,1-aminomutase from Ruminiclostridium cellulolyticum (strain ATCC 35319 / DSM 5812 / JCM 6584 / H10) (Clostridium cellulolyticum).